A 359-amino-acid polypeptide reads, in one-letter code: sn-1 acyl-lipid omega-3 desaturase (ferredoxin) (359 aa).

Polar residues predominate over residues 1–15 (MQLDTISFNNPLNSE). The segment at 1-20 (MQLDTISFNNPLNSETSEDT) is disordered. The next 2 membrane-spanning stretches (helical) occupy residues 47–67 (LFYFFRDILIIGLLYAVASYL) and 70–90 (WLFFPIFWLMQGTMFWALFVV). Positions 92-96 (HDCGH) match the Histidine box-1 motif. Residues 128–132 (HRTHH) carry the Histidine box-2 motif. 2 consecutive transmembrane segments (helical) span residues 207–227 (VLLIGMVGLLGFLTYQWGWMW) and 228–248 (LLKYYAVPYLVFIVWLDLVTF). The Histidine box-3 motif lies at 294-298 (HHIFL).

It belongs to the fatty acid desaturase type 2 family. It depends on Fe(2+) as a cofactor.

Its subcellular location is the membrane. The enzyme catalyses a 1-[(9Z,12Z)-octadecdienoyl]-2-acyl-glycerolipid + 2 reduced [2Fe-2S]-[ferredoxin] + O2 + 2 H(+) = a 1-[(9Z,12Z,15Z)-octadectrienoyl]-2-acyl-glycerolipid + 2 oxidized [2Fe-2S]-[ferredoxin] + 2 H2O. The catalysed reaction is a 1-[(6Z,9Z,12Z)-octadectrienoyl]-2-acyl-glycerolipid + 2 reduced [2Fe-2S]-[ferredoxin] + O2 + 2 H(+) = a 1-[(6Z,9Z,12Z,15Z)-octadectetraenoyl]-2-acyl-glycerolipid + 2 oxidized [2Fe-2S]-[ferredoxin] + 2 H2O. The protein operates within lipid metabolism; polyunsaturated fatty acid biosynthesis. Its function is as follows. Desaturase involved in fatty acid biosynthesis. Introduces a double bond at carbon 15 of linoleoyl and gamma-linolenoyl groups attached to the sn-1 position of the glycerol moiety of membrane glycerolipids. The chain is sn-1 acyl-lipid omega-3 desaturase (ferredoxin) from Nostoc sp. (strain 36).